Here is a 754-residue protein sequence, read N- to C-terminus: Protein NUCLEOLAR FACTOR 1 (754 aa).

3 disordered regions span residues 1–56 (MAPN…EAMV), 69–166 (SLGS…ELST), and 390–413 (EDTDDCDGEKTTSKNGNSIKQKSS). A compositionally biased stretch (acidic residues) spans 42 to 52 (SPEESSIEAES). Basic and acidic residues predominate over residues 80-93 (MNKRRQREEEGKSD). 2 stretches are compositionally biased toward acidic residues: residues 94-110 (TEEDEDDEDEDEEENSG) and 138-161 (DTQEDNDNQSEEEDPDDYETDEEV). Positions 402-413 (SKNGNSIKQKSS) are enriched in polar residues.

Belongs to the UTP25 family. As to quaternary structure, component of the ribosomal small subunit (SSU) processome composed of at least 40 protein subunits and snoRNA U3. Interacts with THAL in the nucleus. In terms of tissue distribution, preferentially expressed in differentiating cells in young tissues such as floral buds, ovules, embryos, secondary roots, pollen, young seedlings and vascular bundles. Observed ubiquitously.

Its subcellular location is the nucleus. The protein resides in the nucleolus. Its function is as follows. DEAD-box RNA helicase-like protein required for pre-18S rRNA processing, specifically at sites A0, A1, and A2. Involved in the control of rRNA expression. Required for embryo development and female gametogenesis. The protein is Protein NUCLEOLAR FACTOR 1 of Arabidopsis thaliana (Mouse-ear cress).